The sequence spans 90 residues: Sec-independent protein translocase protein TatA (90 aa).

The helical transmembrane segment at 1–21 (MGLPGGWELVLIVGVLVLLFG) threads the bilayer. Residues 42–60 (EARGMKEDEEAAKREKQAK) are compositionally biased toward basic and acidic residues. A disordered region spans residues 42-90 (EARGMKEDEEAAKREKQAKSEPQQLTAGESSAPTVASPVEETQRNDSKK). Over residues 61-75 (SEPQQLTAGESSAPT) the composition is skewed to polar residues.

This sequence belongs to the TatA/E family. In terms of assembly, the Tat system comprises two distinct complexes: a TatABC complex, containing multiple copies of TatA, TatB and TatC subunits, and a separate TatA complex, containing only TatA subunits. Substrates initially bind to the TatABC complex, which probably triggers association of the separate TatA complex to form the active translocon.

The protein localises to the cell membrane. Functionally, part of the twin-arginine translocation (Tat) system that transports large folded proteins containing a characteristic twin-arginine motif in their signal peptide across membranes. TatA could form the protein-conducting channel of the Tat system. The protein is Sec-independent protein translocase protein TatA of Saccharopolyspora erythraea (strain ATCC 11635 / DSM 40517 / JCM 4748 / NBRC 13426 / NCIMB 8594 / NRRL 2338).